The sequence spans 160 residues: 3-hydroxyacyl-[acyl-carrier-protein] dehydratase FabZ (160 aa).

His58 is a catalytic residue.

Belongs to the thioester dehydratase family. FabZ subfamily.

The protein localises to the cytoplasm. The catalysed reaction is a (3R)-hydroxyacyl-[ACP] = a (2E)-enoyl-[ACP] + H2O. In terms of biological role, involved in unsaturated fatty acids biosynthesis. Catalyzes the dehydration of short chain beta-hydroxyacyl-ACPs and long chain saturated and unsaturated beta-hydroxyacyl-ACPs. The polypeptide is 3-hydroxyacyl-[acyl-carrier-protein] dehydratase FabZ (Ruegeria sp. (strain TM1040) (Silicibacter sp.)).